We begin with the raw amino-acid sequence, 135 residues long: Putative pre-16S rRNA nuclease (135 aa).

Belongs to the YqgF nuclease family.

It is found in the cytoplasm. Its function is as follows. Could be a nuclease involved in processing of the 5'-end of pre-16S rRNA. The chain is Putative pre-16S rRNA nuclease from Maridesulfovibrio salexigens (strain ATCC 14822 / DSM 2638 / NCIMB 8403 / VKM B-1763) (Desulfovibrio salexigens).